The following is a 416-amino-acid chain: Cysteate synthase (416 aa).

Residue K104 is modified to N6-(pyridoxal phosphate)lysine. Pyridoxal 5'-phosphate is bound at residue N130.

This sequence belongs to the threonine synthase family. Cysteate synthase subfamily. In terms of assembly, homotrimer. Pyridoxal 5'-phosphate is required as a cofactor.

It carries out the reaction O-phospho-L-serine + sulfite + H(+) = L-cysteate + phosphate. It functions in the pathway cofactor biosynthesis; coenzyme M biosynthesis. In terms of biological role, specifically catalyzes the beta-elimination of phosphate from L-phosphoserine and the beta-addition of sulfite to the dehydroalanine intermediate to produce L-cysteate. This is Cysteate synthase from Methanosarcina barkeri (strain Fusaro / DSM 804).